The following is a 371-amino-acid chain: Opine oxidase subunit B (371 aa).

Heterodimer of a subunit A and a subunit B.

Its pathway is opine metabolism; octopine degradation. Oxidative cleavage of octopine into L-arginine and pyruvate. This Agrobacterium tumefaciens (strain Ach5) protein is Opine oxidase subunit B (ooxB).